Reading from the N-terminus, the 679-residue chain is Glycine--tRNA ligase beta subunit (679 aa).

Belongs to the class-II aminoacyl-tRNA synthetase family. As to quaternary structure, tetramer of two alpha and two beta subunits.

It is found in the cytoplasm. It catalyses the reaction tRNA(Gly) + glycine + ATP = glycyl-tRNA(Gly) + AMP + diphosphate. The sequence is that of Glycine--tRNA ligase beta subunit from Streptococcus pyogenes serotype M28 (strain MGAS6180).